The sequence spans 188 residues: Elongation factor P (188 aa).

This sequence belongs to the elongation factor P family.

Its subcellular location is the cytoplasm. It participates in protein biosynthesis; polypeptide chain elongation. In terms of biological role, involved in peptide bond synthesis. Stimulates efficient translation and peptide-bond synthesis on native or reconstituted 70S ribosomes in vitro. Probably functions indirectly by altering the affinity of the ribosome for aminoacyl-tRNA, thus increasing their reactivity as acceptors for peptidyl transferase. The protein is Elongation factor P of Mycoplasma mobile (strain ATCC 43663 / 163K / NCTC 11711) (Mesomycoplasma mobile).